The primary structure comprises 124 residues: Large ribosomal subunit protein uL18 (124 aa).

The protein belongs to the universal ribosomal protein uL18 family. In terms of assembly, part of the 50S ribosomal subunit; part of the 5S rRNA/L5/L18/L25 subcomplex. Contacts the 5S and 23S rRNAs.

This is one of the proteins that bind and probably mediate the attachment of the 5S RNA into the large ribosomal subunit, where it forms part of the central protuberance. This is Large ribosomal subunit protein uL18 from Orientia tsutsugamushi (strain Ikeda) (Rickettsia tsutsugamushi).